The sequence spans 416 residues: Transcription factor PIL1 (416 aa).

Disordered stretches follow at residues 1-24 (MEAK…NIKP), 89-113 (VSQS…KLKS), and 197-231 (ESTY…KRST). Residues 8 to 22 (SSSSEPNMISPSSNI) are compositionally biased toward low complexity. Positions 95–124 (QQDKETNEQMNNNKKKLKSSKIEFERNVSK) form a coiled coil. The segment covering 216 to 229 (VHARTRKPVTKRKR) has biased composition (basic residues). The region spanning 229–278 (RSTEVHKLYERKRRDEFNKKMRALQDLLPNCYKDDKASLLDEAIKYMRTL) is the bHLH domain.

Homodimer. Interacts with APRR1/TOC1. Associates to PTAC12/HMR/PAP5 which acts as a transcriptional coactivator. Mainly expressed in stems, fruits and flowers and, to a lower extent, in leaves, seedlings and roots. Accumulates in etiolated seedlings.

It is found in the nucleus. Functionally, transcription factor. Involved in responses to transient and long-term shade. Required for the light-mediated inhibition of hypocotyl elongation. Necessary for rapid light-induced expression of the photomorphogenesis- and circadian-related gene APRR9. Seems to play a role in multiple PHYB responses, such as flowering transition and petiole elongation. In Arabidopsis thaliana (Mouse-ear cress), this protein is Transcription factor PIL1.